The sequence spans 95 residues: Mitochondrial import inner membrane translocase subunit Tim13 (95 aa).

At methionine 1 the chain carries N-acetylmethionine. Serine 7 is subject to Phosphoserine. Positions 46–69 (CFRKCIGKPGGSLDNSEQKCIAMC) match the Twin CX3C motif motif. Cystine bridges form between cysteine 46-cysteine 69 and cysteine 50-cysteine 65. Lysine 53 carries the N6-succinyllysine modification.

It belongs to the small Tim family. Heterohexamer; composed of 3 copies of TIMM8 (TIMM8A or TIMM8B) and 3 copies of TIMM13, named soluble 70 kDa complex. Associates with the TIM22 complex, whose core is composed of TIMM22. In terms of tissue distribution, ubiquitous, with highest expression in heart, kidney, liver and skeletal muscle.

Its subcellular location is the mitochondrion inner membrane. Functionally, mitochondrial intermembrane chaperone that participates in the import and insertion of some multi-pass transmembrane proteins into the mitochondrial inner membrane. Also required for the transfer of beta-barrel precursors from the TOM complex to the sorting and assembly machinery (SAM complex) of the outer membrane. Acts as a chaperone-like protein that protects the hydrophobic precursors from aggregation and guide them through the mitochondrial intermembrane space. The TIMM8-TIMM13 complex mediates the import of proteins such as TIMM23, SLC25A12/ARALAR1 and SLC25A13/ARALAR2, while the predominant TIMM9-TIMM10 70 kDa complex mediates the import of much more proteins. The chain is Mitochondrial import inner membrane translocase subunit Tim13 (TIMM13) from Homo sapiens (Human).